Reading from the N-terminus, the 317-residue chain is Methionyl-tRNA formyltransferase (317 aa).

(6S)-5,6,7,8-tetrahydrofolate is bound at residue 112-115 (SLLP).

It belongs to the Fmt family.

The catalysed reaction is L-methionyl-tRNA(fMet) + (6R)-10-formyltetrahydrofolate = N-formyl-L-methionyl-tRNA(fMet) + (6S)-5,6,7,8-tetrahydrofolate + H(+). Its function is as follows. Attaches a formyl group to the free amino group of methionyl-tRNA(fMet). The formyl group appears to play a dual role in the initiator identity of N-formylmethionyl-tRNA by promoting its recognition by IF2 and preventing the misappropriation of this tRNA by the elongation apparatus. In Histophilus somni (strain 2336) (Haemophilus somnus), this protein is Methionyl-tRNA formyltransferase.